The primary structure comprises 317 residues: Methionyl-tRNA formyltransferase (317 aa).

110 to 113 contributes to the (6S)-5,6,7,8-tetrahydrofolate binding site; sequence SLLP.

It belongs to the Fmt family.

The catalysed reaction is L-methionyl-tRNA(fMet) + (6R)-10-formyltetrahydrofolate = N-formyl-L-methionyl-tRNA(fMet) + (6S)-5,6,7,8-tetrahydrofolate + H(+). In terms of biological role, attaches a formyl group to the free amino group of methionyl-tRNA(fMet). The formyl group appears to play a dual role in the initiator identity of N-formylmethionyl-tRNA by promoting its recognition by IF2 and preventing the misappropriation of this tRNA by the elongation apparatus. The sequence is that of Methionyl-tRNA formyltransferase from Bacillus subtilis (strain 168).